Consider the following 414-residue polypeptide: Argininosuccinate synthase (414 aa).

Alanine 12–serine 20 lines the ATP pocket. Tyrosine 90 and serine 95 together coordinate L-citrulline. Position 120 (glycine 120) interacts with ATP. Positions 122, 126, and 127 each coordinate L-aspartate. Asparagine 126 is a binding site for L-citrulline. Residues arginine 130, serine 179, serine 188, glutamate 264, and tyrosine 276 each coordinate L-citrulline.

The protein belongs to the argininosuccinate synthase family. Type 1 subfamily. As to quaternary structure, homotetramer.

The protein resides in the cytoplasm. The catalysed reaction is L-citrulline + L-aspartate + ATP = 2-(N(omega)-L-arginino)succinate + AMP + diphosphate + H(+). It participates in amino-acid biosynthesis; L-arginine biosynthesis; L-arginine from L-ornithine and carbamoyl phosphate: step 2/3. The chain is Argininosuccinate synthase from Alkaliphilus metalliredigens (strain QYMF).